A 275-amino-acid chain; its full sequence is MADFLAPKSNTHATISSRFQRVQAEGRLALMPFLMAGDPDLETTAEVLLSLEQSGADMIELGIPYSDPLADGPVIQAAASRALASGTTPARVLQMLIDLRGKLSIPVILFTYTNPLFNRGMERFCDEAAEAGVAGLVVPDLPLEEAERLSPLASARGLDLVLLVAPTTPAERMARIAESSRGFTYLVSVTGVTGERSVMEDRVQSLVQQLKLSGSNPVAVGFGISGPQQVRQVRSWGADGAIVGSALVKRMAAAAPGLVAQEAGLFCKELRNAAG.

Catalysis depends on proton acceptor residues glutamate 60 and aspartate 71.

It belongs to the TrpA family. In terms of assembly, tetramer of two alpha and two beta chains.

It catalyses the reaction (1S,2R)-1-C-(indol-3-yl)glycerol 3-phosphate + L-serine = D-glyceraldehyde 3-phosphate + L-tryptophan + H2O. It participates in amino-acid biosynthesis; L-tryptophan biosynthesis; L-tryptophan from chorismate: step 5/5. In terms of biological role, the alpha subunit is responsible for the aldol cleavage of indoleglycerol phosphate to indole and glyceraldehyde 3-phosphate. This Prochlorococcus marinus (strain MIT 9313) protein is Tryptophan synthase alpha chain.